Consider the following 212-residue polypeptide: Imidazole glycerol phosphate synthase subunit HisH (212 aa).

Residues 2-212 enclose the Glutamine amidotransferase type-1 domain; it reads QTAIIDYGMG…LTMLKNFLNW (211 aa). Cys85 functions as the Nucleophile in the catalytic mechanism. Residues His194 and Glu196 contribute to the active site.

As to quaternary structure, heterodimer of HisH and HisF.

Its subcellular location is the cytoplasm. The catalysed reaction is 5-[(5-phospho-1-deoxy-D-ribulos-1-ylimino)methylamino]-1-(5-phospho-beta-D-ribosyl)imidazole-4-carboxamide + L-glutamine = D-erythro-1-(imidazol-4-yl)glycerol 3-phosphate + 5-amino-1-(5-phospho-beta-D-ribosyl)imidazole-4-carboxamide + L-glutamate + H(+). The enzyme catalyses L-glutamine + H2O = L-glutamate + NH4(+). It participates in amino-acid biosynthesis; L-histidine biosynthesis; L-histidine from 5-phospho-alpha-D-ribose 1-diphosphate: step 5/9. Its function is as follows. IGPS catalyzes the conversion of PRFAR and glutamine to IGP, AICAR and glutamate. The HisH subunit catalyzes the hydrolysis of glutamine to glutamate and ammonia as part of the synthesis of IGP and AICAR. The resulting ammonia molecule is channeled to the active site of HisF. The sequence is that of Imidazole glycerol phosphate synthase subunit HisH from Neisseria gonorrhoeae (strain ATCC 700825 / FA 1090).